A 599-amino-acid chain; its full sequence is Dachshund homolog 2 (599 aa).

A DACHbox-N region spans residues 69–155; it reads RMVDMHGMKV…LITRKDFETL (87 aa). Disordered regions lie at residues 166–186, 237–280, and 370–409; these read RQMT…PKRS, LQGN…GPQH, and RIPE…MDHH. Polar residues predominate over residues 237–262; sequence LQGNGSQNGTESEPDDLNSNTGGSES. Residues 389 to 405 show a composition bias toward low complexity; that stretch reads SQTSSHTSSSVSSSPSQ. Residues 453-533 are DACHbox-C; sequence SSVETLLTNI…KTKRKLQEAL (81 aa). Residues 459–554 are a coiled coil; it reads LTNIQGLLKV…QALKQATTSD (96 aa).

The protein belongs to the DACH/dachshund family. As to quaternary structure, interacts with SIX6 and EYA2.

The protein localises to the nucleus. Its function is as follows. Transcription factor that is involved in regulation of organogenesis. Seems to be a regulator for SIX1 and SIX6. Seems to act as a corepressor of SIX6 in regulating proliferation by directly repressing cyclin-dependent kinase inhibitors, including the p27Kip1 promoter. Is recruited with SIX6 to the p27Kip1 promoter in embryonal retina. SIX6 corepression also seems to involve NCOR1, TBL1, HDAC1 and HDAC3. May be involved together with PAX3, SIX1, and EYA2 in regulation of myogenesis. In the developing somite, expression of DACH2 and PAX3 is regulated by the overlying ectoderm, and DACH2 and PAX3 positively regulate each other's expression. Probably binds to DNA via its DACHbox-N domain. The sequence is that of Dachshund homolog 2 (DACH2) from Homo sapiens (Human).